A 551-amino-acid polypeptide reads, in one-letter code: Delta-selinene synthase TPS7FN (551 aa).

Residues arginine 266, aspartate 303, aspartate 307, arginine 444, and aspartate 447 each coordinate (2E,6E)-farnesyl diphosphate. 2 residues coordinate Mg(2+): aspartate 303 and aspartate 307. A DDXXD motif motif is present at residues 303–307 (DDIYD). Positions 447, 451, and 455 each coordinate Mg(2+).

The protein belongs to the terpene synthase family. Tpsb subfamily. Mg(2+) is required as a cofactor. Requires Mn(2+) as cofactor.

It catalyses the reaction (2E,6E)-farnesyl diphosphate = delta-selinene + diphosphate. The catalysed reaction is (2E)-geranyl diphosphate = beta-myrcene + diphosphate. It carries out the reaction (2E)-geranyl diphosphate = (4S)-limonene + diphosphate. The enzyme catalyses (2E,6E)-farnesyl diphosphate + H2O = selina-6-en-4-ol + diphosphate. It participates in secondary metabolite biosynthesis; terpenoid biosynthesis. Functionally, involved in sesquiterpene olefins biosynthesis, constituants of cannabinoids and terpenoids-rich resins. Catalyzes mainly the conversion of (2E)-farnesyl diphosphate to delta-selinene, and also produces minor products such as selina-6-en-4-ol. Can also use (2E)-geranyl diphosphate as substrate with low efficiency, producing minor amounts of myrcene and limonene. This Cannabis sativa (Hemp) protein is Delta-selinene synthase TPS7FN.